The sequence spans 605 residues: MNHFPKLLSSQIGFDVAQTMLEYFDRHYRIFREAAVDAKTLFERGDWHGLQRLARERITSYDERVKECVEVLEDEYDAENIDDEVWQQIKLHYIGLLTSHRQPECAETFFNSVCCKILHRSYFSNDFIFVRPAISTEYLENDEPAAKPTYRAYYPGTDGLAVTLERIVTNFQLDPPFEDLTRDIGCVMQAIDDEFGHFDEAPNFQIHVLSSLFFRNKSAYIVGRIINADRVLPFAVPIRHVRPGVLALDTVLLRRDLLQIIFSFSHSYFLVDMGVPSAYVDFLCTIMPGKPKAEIYTSVGLQKQGKNLFYRDLLHHLSHSSDRFIIAPGIKGLVMLVFTLPSFPYVFKIIKDHFPPPKETTRAQIMEKYQLVKRHDRLGRMADTLEYSSVALPLARLDHALVRELEKEVPSLLEYEDDKLVIKHLYIERRMTPLNLYLQNGSDADVEHGVKEYGNAVKELMKANIFPGDMLYKNFGVTRHGRVVFYDYDEIEYLTDCNVRRVPPPRNEEDELSGEPWYTVGPHDIFPETYGPFLLGDPRVRSVFMKHHADFFDPALWQASKDKLMQGELPDFYPYDAALRFSVRYPARFGATGENDGAGDAQRAA.

ATP is bound by residues 327-333 (APGIKGL) and lysine 348. Aspartate 383 is an active-site residue.

It belongs to the AceK family.

It is found in the cytoplasm. The enzyme catalyses L-seryl-[isocitrate dehydrogenase] + ATP = O-phospho-L-seryl-[isocitrate dehydrogenase] + ADP + H(+). Its function is as follows. Bifunctional enzyme which can phosphorylate or dephosphorylate isocitrate dehydrogenase (IDH) on a specific serine residue. This is a regulatory mechanism which enables bacteria to bypass the Krebs cycle via the glyoxylate shunt in response to the source of carbon. When bacteria are grown on glucose, IDH is fully active and unphosphorylated, but when grown on acetate or ethanol, the activity of IDH declines drastically concomitant with its phosphorylation. The protein is Isocitrate dehydrogenase kinase/phosphatase of Burkholderia orbicola (strain MC0-3).